The sequence spans 323 residues: ATP synthase gamma chain (323 aa).

An insert region spans residues 206 to 240 (NPIVNLVGFGYKERGVKPINNRRATSDIVGESKSI).

It belongs to the ATPase gamma chain family. In terms of assembly, F-type ATPases have 2 components, CF(1) - the catalytic core - and CF(0) - the membrane proton channel. CF(1) has five subunits: alpha(3), beta(3), gamma(1), delta(1), epsilon(1). CF(0) has three main subunits: a, b and c.

It is found in the cell inner membrane. Produces ATP from ADP in the presence of a proton gradient across the membrane. The gamma chain is believed to be important in regulating ATPase activity and the flow of protons through the CF(0) complex. This Rickettsia conorii (strain ATCC VR-613 / Malish 7) protein is ATP synthase gamma chain.